The chain runs to 311 residues: Aspartate carbamoyltransferase catalytic subunit (311 aa).

Carbamoyl phosphate-binding residues include R55 and T56. K85 lines the L-aspartate pocket. Carbamoyl phosphate-binding residues include R106, H135, and Q138. The L-aspartate site is built by R168 and R230. Carbamoyl phosphate is bound by residues L268 and P269.

This sequence belongs to the aspartate/ornithine carbamoyltransferase superfamily. ATCase family. In terms of assembly, heterododecamer (2C3:3R2) of six catalytic PyrB chains organized as two trimers (C3), and six regulatory PyrI chains organized as three dimers (R2).

The catalysed reaction is carbamoyl phosphate + L-aspartate = N-carbamoyl-L-aspartate + phosphate + H(+). Its pathway is pyrimidine metabolism; UMP biosynthesis via de novo pathway; (S)-dihydroorotate from bicarbonate: step 2/3. Its function is as follows. Catalyzes the condensation of carbamoyl phosphate and aspartate to form carbamoyl aspartate and inorganic phosphate, the committed step in the de novo pyrimidine nucleotide biosynthesis pathway. The sequence is that of Aspartate carbamoyltransferase catalytic subunit from Salmonella arizonae (strain ATCC BAA-731 / CDC346-86 / RSK2980).